Reading from the N-terminus, the 485-residue chain is AP2-like ethylene-responsive transcription factor TOE2 (485 aa).

Gly residues predominate over residues 124–135 (GDFIGSGSGGGD). Residues 124–161 (GDFIGSGSGGGDASRVMQPPSQPVKKSRRGPRSKSSQY) form a disordered region. The segment at residues 160–216 (QYRGVTFYRRTGRWESHIWDCGKQVYLGGFDTAHAAARAYDRAAVKFRGLEADINFV) is a DNA-binding region (AP2/ERF).

The protein belongs to the AP2/ERF transcription factor family. AP2 subfamily.

Its subcellular location is the nucleus. In terms of biological role, probably acts as a transcriptional activator. Binds to the GCC-box pathogenesis-related promoter element. May be involved in the regulation of gene expression by stress factors and by components of stress signal transduction pathways. Regulates negatively the transition to flowering time and confers flowering time delay. This chain is AP2-like ethylene-responsive transcription factor TOE2 (TOE2), found in Arabidopsis thaliana (Mouse-ear cress).